A 1051-amino-acid polypeptide reads, in one-letter code: Integrin alpha-3 (1051 aa).

An N-terminal signal peptide occupies residues 1 to 32 (MGPGPRCAPGDPGWMLGALALMVAASGRFAFA). Over 33–991 (FNLDTRFLVV…LVEELPAEIE (959 aa)) the chain is Extracellular. FG-GAP repeat units lie at residues 38 to 103 (RFLV…KDDC), 110 to 171 (EKSD…DLQL), 185 to 235 (CNSN…WDLS), 236 to 292 (EYSY…GGDL), 293 to 354 (KRKQ…TSFP), 356 to 411 (QPSL…GLLR), and 415 to 477 (QIVH…VARP). A glycan (N-linked (GlcNAc...) asparagine) is linked at asparagine 86. Cystine bridges form between cysteine 94–cysteine 103, cysteine 140–cysteine 162, and cysteine 185–cysteine 197. Ca(2+) contacts are provided by aspartate 315, asparagine 317, aspartate 319, aspartate 323, aspartate 378, asparagine 380, aspartate 382, aspartate 386, aspartate 439, aspartate 441, asparagine 443, tyrosine 445, and aspartate 447. Disulfide bonds link cysteine 485-cysteine 490 and cysteine 496-cysteine 550. 4 N-linked (GlcNAc...) asparagine glycosylation sites follow: asparagine 500, asparagine 511, asparagine 573, and asparagine 605. A disulfide bridge connects residues cysteine 615 and cysteine 621. Asparagine 656, asparagine 697, and asparagine 841 each carry an N-linked (GlcNAc...) asparagine glycan. Residues cysteine 694 and cysteine 702 are joined by a disulfide bond. Disulfide bonds link cysteine 846/cysteine 904 and cysteine 911/cysteine 916. Residues 860-888 (LSDPGDKPHSPQRRRRQLDPGGDQGSPPV) form a disordered region. 4 N-linked (GlcNAc...) asparagine glycosylation sites follow: asparagine 923, asparagine 926, asparagine 935, and asparagine 969. The helical transmembrane segment at 992-1019 (LWLVLVAVSAGLLLLGLIIILLWKCGFF) threads the bilayer. The GFFKR motif signature appears at 1017 to 1021 (GFFKR). Over 1020-1051 (KRARTRALYEAKRQKAEMKSQPSETERLTDDY) the chain is Cytoplasmic.

It belongs to the integrin alpha chain family. As to quaternary structure, heterodimer of an alpha and a beta subunit. The alpha subunit is composed of a heavy and a light chain linked by a disulfide bond. Alpha-3 associates with beta-1. Interacts with HPS5. Interacts with FAP (seprase); the interaction occurs at the cell surface of invadopodia membrane in a collagen-dependent manner. Post-translationally, isoform 1, but not isoform 2, is phosphorylated on serine residues.

The protein localises to the cell membrane. Its subcellular location is the cell projection. The protein resides in the invadopodium membrane. It localises to the filopodium membrane. Functionally, integrin alpha-3/beta-1 is a receptor for fibronectin, laminin, collagen, epiligrin, thrombospondin and CSPG4. Integrin alpha-3/beta-1 provides a docking site for FAP (seprase) at invadopodia plasma membranes in a collagen-dependent manner and hence may participate in the adhesion, formation of invadopodia and matrix degradation processes, promoting cell invasion. Alpha-3/beta-1 may mediate with LGALS3 the stimulation by CSPG4 of endothelial cells migration. The protein is Integrin alpha-3 (ITGA3) of Cricetulus griseus (Chinese hamster).